Here is a 176-residue protein sequence, read N- to C-terminus: Sarcoplasmic calcium-binding protein (176 aa).

The residue at position 1 (Thr-1) is an N-acetylthreonine. 4 EF-hand domains span residues 3–38, 55–90, 91–126, and 127–160; these read YLVSKWKIWYKSLDVNHDGIISIENVEESRNKFTDL, KWWDTYIFLTPGAEISETQFVENLGNSFKKDKAFLA, TMTACFNMIFDVIDTDKDRSIDLNEFIYAFAAFGHE, and NESVVRTAFALLKPDDDNTVPLRTVVDAWISFVT. Ca(2+) is bound by residues Asp-16, Asn-18, Asp-20, and Asn-27. 5 residues coordinate Ca(2+): Asp-104, Asp-106, Asp-108, Ser-110, and Glu-115.

Functionally, like parvalbumins, SCPs seem to be more abundant in fast contracting muscles, but no functional relationship can be established from this distribution. This chain is Sarcoplasmic calcium-binding protein, found in Mizuhopecten yessoensis (Japanese scallop).